We begin with the raw amino-acid sequence, 183 residues long: MIPRKAFLTKGTGVHKDRLASFELALRDAKIEKYNLVSVSSILPPNCKLVTREEGLSELKPGAIVHCVLARNDTNEPHRLMASAIGTAVPVNEDNYGYISEHHSFGEEEIIAGEYAEDLAATMLATTLGIEFNAEMAWHEREQVYKASGHIFDTFHICQTAAGDKNGKWTTVVAAMVFVTSKC.

At serine 41 the chain carries Pyruvic acid (Ser).

It belongs to the PdaD family. Pyruvate is required as a cofactor.

The catalysed reaction is L-arginine + H(+) = agmatine + CO2. This Methanosarcina acetivorans (strain ATCC 35395 / DSM 2834 / JCM 12185 / C2A) protein is Pyruvoyl-dependent arginine decarboxylase 2 (pdaD2).